The following is a 213-amino-acid chain: Kynurenine formamidase (213 aa).

A substrate-binding site is contributed by W18. The Zn(2+) site is built by H48, H52, and D54. H58 functions as the Proton donor/acceptor in the catalytic mechanism. Zn(2+)-binding residues include H160 and E172.

This sequence belongs to the Cyclase 1 superfamily. KynB family. As to quaternary structure, homodimer. The cofactor is Zn(2+).

It catalyses the reaction N-formyl-L-kynurenine + H2O = L-kynurenine + formate + H(+). The protein operates within amino-acid degradation; L-tryptophan degradation via kynurenine pathway; L-kynurenine from L-tryptophan: step 2/2. Catalyzes the hydrolysis of N-formyl-L-kynurenine to L-kynurenine, the second step in the kynurenine pathway of tryptophan degradation. In Burkholderia mallei (strain NCTC 10247), this protein is Kynurenine formamidase.